The primary structure comprises 117 residues: LIM and senescent cell antigen-like-containing domain protein 3 (117 aa).

The 48-residue stretch at 70 to 117 (ATCERCKGGFAPAETIVNSNGELYHEQCFVCAQCFQQFPEGLFYEERT) folds into the LIM zinc-binding domain.

As to expression, detected in testis.

The protein resides in the cytoplasm. The chain is LIM and senescent cell antigen-like-containing domain protein 3 (LIMS3) from Homo sapiens (Human).